A 609-amino-acid chain; its full sequence is Aspartate--tRNA(Asp/Asn) ligase (609 aa).

An L-aspartate-binding site is contributed by glutamate 177. Residues 201–204 (QLFK) form an aspartate region. Arginine 223 provides a ligand contact to L-aspartate. ATP contacts are provided by residues 223 to 225 (RDE) and glutamine 232. L-aspartate is bound at residue histidine 461. An ATP-binding site is contributed by glutamate 499. L-aspartate is bound at residue arginine 506. 551–554 (GVDR) lines the ATP pocket.

It belongs to the class-II aminoacyl-tRNA synthetase family. Type 1 subfamily. In terms of assembly, homodimer.

The protein localises to the cytoplasm. The catalysed reaction is tRNA(Asx) + L-aspartate + ATP = L-aspartyl-tRNA(Asx) + AMP + diphosphate. Functionally, aspartyl-tRNA synthetase with relaxed tRNA specificity since it is able to aspartylate not only its cognate tRNA(Asp) but also tRNA(Asn). Reaction proceeds in two steps: L-aspartate is first activated by ATP to form Asp-AMP and then transferred to the acceptor end of tRNA(Asp/Asn). This is Aspartate--tRNA(Asp/Asn) ligase from Synechococcus sp. (strain CC9605).